Here is a 263-residue protein sequence, read N- to C-terminus: 5'-nucleotidase SurE (263 aa).

4 residues coordinate a divalent metal cation: Asp-10, Asp-11, Ser-41, and Asn-95.

This sequence belongs to the SurE nucleotidase family. Requires a divalent metal cation as cofactor.

The protein resides in the cytoplasm. It catalyses the reaction a ribonucleoside 5'-phosphate + H2O = a ribonucleoside + phosphate. Nucleotidase that shows phosphatase activity on nucleoside 5'-monophosphates. This chain is 5'-nucleotidase SurE, found in Methanoculleus marisnigri (strain ATCC 35101 / DSM 1498 / JR1).